We begin with the raw amino-acid sequence, 118 residues long: UPF0102 protein Franean1_1156 (118 aa).

It belongs to the UPF0102 family.

This is UPF0102 protein Franean1_1156 from Parafrankia sp. (strain EAN1pec).